Reading from the N-terminus, the 274-residue chain is Pyrroline-5-carboxylate reductase 3 (274 aa).

Alanine 2 carries the N-acetylalanine modification.

It belongs to the pyrroline-5-carboxylate reductase family. As to quaternary structure, homodecamer; composed of 5 homodimers.

The protein resides in the cytoplasm. It carries out the reaction L-proline + NADP(+) = (S)-1-pyrroline-5-carboxylate + NADPH + 2 H(+). The catalysed reaction is L-proline + NAD(+) = (S)-1-pyrroline-5-carboxylate + NADH + 2 H(+). The protein operates within amino-acid biosynthesis; L-proline biosynthesis; L-proline from L-glutamate 5-semialdehyde: step 1/1. Its function is as follows. Oxidoreductase that catalyzes the last step in proline biosynthesis, which corresponds to the reduction of pyrroline-5-carboxylate (P5C) to L-proline using NAD(P)H. Proline is synthesized from either glutamate or ornithine; both are converted to P5C, and then to proline via pyrroline-5-carboxylate reductases (PYCRs). PYCR3 is exclusively linked to the biosynthesis of proline from ornithine. This is Pyrroline-5-carboxylate reductase 3 from Rattus norvegicus (Rat).